The primary structure comprises 188 residues: MSAGKRSAAGSARSDTATSTVDLHASLLPLAFLVGTWRGEGVGGYEGLDGFHYGQEITFAADGRPALGYVSHTWWADEPRDGREPGSPLATETGFWRVQPGEDGKPVVEVMLAHPFGIAEIYVGTVTGTRIDLDHNVLIRTATARDVTRSVRLYGLVEGCDLAYAIDMEAEGKPMQSHLSARLHRVSD.

The GXWXGXG signature appears at 35 to 41; sequence GTWRGEG. Histidine 178 contributes to the heme b binding site.

The protein belongs to the nitrobindin family. In terms of assembly, homodimer. Heme b is required as a cofactor.

It carries out the reaction peroxynitrite = nitrate. Its pathway is nitrogen metabolism. In terms of biological role, heme-binding protein able to scavenge peroxynitrite and to protect free L-tyrosine against peroxynitrite-mediated nitration, by acting as a peroxynitrite isomerase that converts peroxynitrite to nitrate. Therefore, this protein likely plays a role in peroxynitrite sensing and in the detoxification of reactive nitrogen and oxygen species (RNS and ROS, respectively). Is able to bind nitric oxide (NO) in vitro, but may act as a sensor of peroxynitrite levels in vivo. In Frankia casuarinae (strain DSM 45818 / CECT 9043 / HFP020203 / CcI3), this protein is Peroxynitrite isomerase.